A 299-amino-acid chain; its full sequence is Oxygen-dependent coproporphyrinogen-III oxidase (299 aa).

Ser-92 provides a ligand contact to substrate. A divalent metal cation is bound by residues His-96 and His-106. His-106 serves as the catalytic Proton donor. Residue 108–110 coordinates substrate; it reads NVR. A divalent metal cation is bound by residues His-145 and His-175. The segment at 240–275 is important for dimerization; the sequence is YVEFNLVWDRGTLFGLQTGGRTESILMSMPPLVRWE. 258-260 contacts substrate; it reads GGR.

This sequence belongs to the aerobic coproporphyrinogen-III oxidase family. In terms of assembly, homodimer. Requires a divalent metal cation as cofactor.

The protein localises to the cytoplasm. The enzyme catalyses coproporphyrinogen III + O2 + 2 H(+) = protoporphyrinogen IX + 2 CO2 + 2 H2O. It functions in the pathway porphyrin-containing compound metabolism; protoporphyrin-IX biosynthesis; protoporphyrinogen-IX from coproporphyrinogen-III (O2 route): step 1/1. Involved in the heme biosynthesis. Catalyzes the aerobic oxidative decarboxylation of propionate groups of rings A and B of coproporphyrinogen-III to yield the vinyl groups in protoporphyrinogen-IX. This is Oxygen-dependent coproporphyrinogen-III oxidase from Klebsiella pneumoniae (strain 342).